The following is a 233-amino-acid chain: MAENEAQKLINFIANAKKITPVKVTYKGTLATEVPDTVQQFGDESFGQLIGDWSEIELLIKNLPSEDVFIENDSRNSAVPLLDKKEINARIEPGAIIRDQVEIGDNAVIMLGAVINIGAEIGANTMIDMGAVLGGRAIVGENSHIGAGAVLAGVIEPASAQPVRIGNNVLVGANAVVIEGVQVGDGAVVAAGAIVTKDVPANTVVAGVPAKVIKEIDSKTQQKTALIDALRGL.

It belongs to the transferase hexapeptide repeat family. DapH subfamily.

The enzyme catalyses (S)-2,3,4,5-tetrahydrodipicolinate + acetyl-CoA + H2O = L-2-acetamido-6-oxoheptanedioate + CoA. It functions in the pathway amino-acid biosynthesis; L-lysine biosynthesis via DAP pathway; LL-2,6-diaminopimelate from (S)-tetrahydrodipicolinate (acetylase route): step 1/3. Its function is as follows. Catalyzes the transfer of an acetyl group from acetyl-CoA to tetrahydrodipicolinate. This chain is 2,3,4,5-tetrahydropyridine-2,6-dicarboxylate N-acetyltransferase, found in Leuconostoc mesenteroides subsp. mesenteroides (strain ATCC 8293 / DSM 20343 / BCRC 11652 / CCM 1803 / JCM 6124 / NCDO 523 / NBRC 100496 / NCIMB 8023 / NCTC 12954 / NRRL B-1118 / 37Y).